Reading from the N-terminus, the 365-residue chain is NAC domain-containing protein 37 (365 aa).

The NAC domain occupies 9–158 (VPPGFRFHPT…GWVVCRAFKK (150 aa)). The DNA-binding element occupies 109–164 (IGMRKTLVFYKGRAPNGKKSDWIMHEYRLESDENAPPQEEGWVVCRAFKKRATGQA).

Belongs to the plant vascular related NAC-domain protein family. Interacts with NAC030/VND7. In terms of tissue distribution, expressed in root metaxylem pole and in shoot pre-procambium and procambium. Present in root developing xylems. Specifically expressed in vessels but not in interfascicular fibers in stems.

It is found in the nucleus. Transcription activator that binds to the secondary wall NAC binding element (SNBE), 5'-(T/A)NN(C/T)(T/C/G)TNNNNNNNA(A/C)GN(A/C/T)(A/T)-3', in the promoter of target genes. Involved in xylem formation by promoting the expression of secondary wall-associated transcription factors and of genes involved in secondary wall biosynthesis and programmed cell death, genes driven by the secondary wall NAC binding element (SNBE). Triggers thickening of secondary walls. The protein is NAC domain-containing protein 37 of Arabidopsis thaliana (Mouse-ear cress).